The primary structure comprises 940 residues: MSDYKFTLNLPETEFPMRGNLANREPEMLERWTKDGLYQQIRDSRIGRTPFILHDGPPYANGSIHIGHSVNKILKDIIVKSKTMSGFDAPYVPGWDCHGLPIELKVEQKVGKPGQKISAAEFREECRKYAAEQVDGQRADFIRLGVLGDWQKPYLTMDFATEANIVRSLSKVIENGHLHKGVKPVHWCTDCGSALAEAEVEYEDKTSPAIDVAFTATDSKALAAQFGVSDYSHPVAMVIWTTTPWTLPANRALSISPELDYSLVEFAKEGATHAVILADVLVEACMTRYGAESHSVLGKVKGVALELVRFKHPFLAFDVPAILGDHVTTDAGTGVVHTAPGHGQDDFVVGQKYGLEVANPVGDNGVYKPDTEFFAGQHVFKANDNVVALLKEKGALLHHVAYRHSYPHCWRHKTPIIFRATPQWFISMDNQNLRKQALSEIEQTQWIPDWGQSRIEKMVENRPDWCISRQRTWGVPITLFVHRETEELHPDSVSLMARVANRIEQEGIQAWWDLDAAELLGEEAEQYRKVTDTLDVWYDSGSTFASVVGARPEFHGHGVDLYLEGSDQHRGWFMSSLMISTAMTGKAPYKQVLTHGFTVDGKGRKMSKSIGNVIAPQQVTNKLGADILRLWVAATDYSGEMTVSDEILNRSADAYRRIRNTARFLLANLNGFDPAKDLVAVEDMVALDRWAVRRAAALQQEIIEAYEQYNFHIVTQKLMQFCSVELGSFYLDIIKDRQYTAKQEGHARRSCQSALFHIAEAMVRWIAPILSFTADEVWQLLPGQRDAYVFTQEWYQDLQSITLDTDLSDAYWENLLTVRNEVNKVIEQARRDKRIGGSLDAEVTLFADAALTEQLTHIGDELRFVLLTSEAKVLPLADATSDAVETELASLKLEVNATTAEKCERCWHHREEVGTIEAHPTLCHRCVTNIEGDGEVRLFA.

The 'HIGH' region motif lies at 58–68; sequence PYANGSIHIGH. L-isoleucyl-5'-AMP is bound at residue Glu564. Residues 605-609 carry the 'KMSKS' region motif; sequence KMSKS. Position 608 (Lys608) interacts with ATP. Zn(2+) is bound by residues Cys903, Cys906, Cys923, and Cys926.

The protein belongs to the class-I aminoacyl-tRNA synthetase family. IleS type 1 subfamily. Monomer. It depends on Zn(2+) as a cofactor.

Its subcellular location is the cytoplasm. It carries out the reaction tRNA(Ile) + L-isoleucine + ATP = L-isoleucyl-tRNA(Ile) + AMP + diphosphate. Catalyzes the attachment of isoleucine to tRNA(Ile). As IleRS can inadvertently accommodate and process structurally similar amino acids such as valine, to avoid such errors it has two additional distinct tRNA(Ile)-dependent editing activities. One activity is designated as 'pretransfer' editing and involves the hydrolysis of activated Val-AMP. The other activity is designated 'posttransfer' editing and involves deacylation of mischarged Val-tRNA(Ile). The polypeptide is Isoleucine--tRNA ligase (Shewanella sp. (strain ANA-3)).